The sequence spans 549 residues: Glucose-6-phosphate isomerase (549 aa).

E355 acts as the Proton donor in catalysis. Active-site residues include H386 and K514.

This sequence belongs to the GPI family.

The protein resides in the cytoplasm. The enzyme catalyses alpha-D-glucose 6-phosphate = beta-D-fructose 6-phosphate. Its pathway is carbohydrate biosynthesis; gluconeogenesis. It participates in carbohydrate degradation; glycolysis; D-glyceraldehyde 3-phosphate and glycerone phosphate from D-glucose: step 2/4. Its function is as follows. Catalyzes the reversible isomerization of glucose-6-phosphate to fructose-6-phosphate. The protein is Glucose-6-phosphate isomerase of Salmonella paratyphi B (strain ATCC BAA-1250 / SPB7).